The primary structure comprises 296 residues: GTPase Era (296 aa).

Residues 3–170 (KSGFVTIVGR…KELMFKYIPE (168 aa)) enclose the Era-type G domain. Positions 11–18 (GRPNVGKS) are G1. 11 to 18 (GRPNVGKS) serves as a coordination point for GTP. The G2 stretch occupies residues 37–41 (QTTRN). A G3 region spans residues 58–61 (DTPG). GTP contacts are provided by residues 58 to 62 (DTPGI) and 120 to 123 (NKID). A G4 region spans residues 120-123 (NKID). The G5 stretch occupies residues 149–151 (ISA). Positions 201-278 (LSEEVPHGIA…YIRLWVKVKE (78 aa)) constitute a KH type-2 domain.

This sequence belongs to the TRAFAC class TrmE-Era-EngA-EngB-Septin-like GTPase superfamily. Era GTPase family. In terms of assembly, monomer.

It localises to the cytoplasm. The protein resides in the cell membrane. An essential GTPase that binds both GDP and GTP, with rapid nucleotide exchange. Plays a role in 16S rRNA processing and 30S ribosomal subunit biogenesis and possibly also in cell cycle regulation and energy metabolism. The chain is GTPase Era from Clostridium botulinum (strain 657 / Type Ba4).